The chain runs to 243 residues: MNSQQDTIYAHVTDQITDFQFDQRVAGVFNDMIRRSVPGYAQIINTIGDFANRFVTPQSNIYDLGSSLGSATLSIRRQIEGRGCQIYAVDNSQSMIERCTENLAAYVSDIKVNLLCADIRDIDIKNASMVVLNFTLQFLPTHDRDALIKRIYDGMLPGGILVISEKLFFEDNHIQQLLDEQHLDFKRANGYSELEISQKRSALENVMRPDSLNVHQQRLTENGFSHFSVWFQCFNFASMVAIK.

Residues Y40, 65–67 (GSS), 90–91 (DN), 118–119 (DI), N133, and R200 contribute to the S-adenosyl-L-methionine site.

Belongs to the class I-like SAM-binding methyltransferase superfamily. Cx-SAM synthase family. In terms of assembly, homodimer.

The catalysed reaction is prephenate + S-adenosyl-L-methionine = carboxy-S-adenosyl-L-methionine + 3-phenylpyruvate + H2O. Catalyzes the conversion of S-adenosyl-L-methionine (SAM) to carboxy-S-adenosyl-L-methionine (Cx-SAM). The polypeptide is Carboxy-S-adenosyl-L-methionine synthase (Shewanella frigidimarina (strain NCIMB 400)).